The sequence spans 401 residues: Formate-dependent phosphoribosylglycinamide formyltransferase (401 aa).

N(1)-(5-phospho-beta-D-ribosyl)glycinamide contacts are provided by residues 27–28 (EL) and Glu-87. ATP-binding positions include Arg-119, Lys-160, 165-170 (SSGKGQ), 200-203 (EELV), and Glu-208. The ATP-grasp domain maps to 124 to 313 (EFAAEEVGVT…QFDLHLRAIL (190 aa)). Positions 272 and 284 each coordinate Mg(2+). N(1)-(5-phospho-beta-D-ribosyl)glycinamide is bound by residues Asp-291, Lys-361, and 368 to 369 (RR).

This sequence belongs to the PurK/PurT family. In terms of assembly, homodimer.

The catalysed reaction is N(1)-(5-phospho-beta-D-ribosyl)glycinamide + formate + ATP = N(2)-formyl-N(1)-(5-phospho-beta-D-ribosyl)glycinamide + ADP + phosphate + H(+). It functions in the pathway purine metabolism; IMP biosynthesis via de novo pathway; N(2)-formyl-N(1)-(5-phospho-D-ribosyl)glycinamide from N(1)-(5-phospho-D-ribosyl)glycinamide (formate route): step 1/1. Functionally, involved in the de novo purine biosynthesis. Catalyzes the transfer of formate to 5-phospho-ribosyl-glycinamide (GAR), producing 5-phospho-ribosyl-N-formylglycinamide (FGAR). Formate is provided by PurU via hydrolysis of 10-formyl-tetrahydrofolate. The sequence is that of Formate-dependent phosphoribosylglycinamide formyltransferase from Haloquadratum walsbyi (strain DSM 16790 / HBSQ001).